Consider the following 740-residue polypeptide: Ion-translocating oxidoreductase complex subunit C (740 aa).

2 4Fe-4S ferredoxin-type domains span residues 369-397 (GEPQEEQSCIRCSACADACPADLLPQQLY) and 407-436 (KATTHNIADCIECGACAWVCPSNIPLVQYF). Positions 377, 380, 383, 387, 416, 419, 422, and 426 each coordinate [4Fe-4S] cluster. 2 disordered regions span residues 571–590 (LEQQQANAEPEQQVDPRKAA) and 602–716 (KLEQ…DPRK). 2 stretches are compositionally biased toward low complexity: residues 573 to 583 (QQQANAEPEQQ) and 637 to 647 (QQQANAEPEQQ).

The protein belongs to the 4Fe4S bacterial-type ferredoxin family. RnfC subfamily. As to quaternary structure, the complex is composed of six subunits: RsxA, RsxB, RsxC, RsxD, RsxE and RsxG. [4Fe-4S] cluster is required as a cofactor.

It localises to the cell inner membrane. Its function is as follows. Part of a membrane-bound complex that couples electron transfer with translocation of ions across the membrane. Required to maintain the reduced state of SoxR. Probably transfers electron from NAD(P)H to SoxR. This Escherichia coli (strain K12) protein is Ion-translocating oxidoreductase complex subunit C.